The following is a 467-amino-acid chain: ATP-dependent protease ATPase subunit HslU (467 aa).

ATP-binding positions include V20, G62–E67, D280, E345, and R417.

This sequence belongs to the ClpX chaperone family. HslU subfamily. A double ring-shaped homohexamer of HslV is capped on each side by a ring-shaped HslU homohexamer. The assembly of the HslU/HslV complex is dependent on binding of ATP.

The protein resides in the cytoplasm. Functionally, ATPase subunit of a proteasome-like degradation complex; this subunit has chaperone activity. The binding of ATP and its subsequent hydrolysis by HslU are essential for unfolding of protein substrates subsequently hydrolyzed by HslV. HslU recognizes the N-terminal part of its protein substrates and unfolds these before they are guided to HslV for hydrolysis. The protein is ATP-dependent protease ATPase subunit HslU of Enterococcus faecalis (strain ATCC 700802 / V583).